Here is a 259-residue protein sequence, read N- to C-terminus: Nodulation protein J (259 aa).

Residues 30–256 (ASILGNLADP…LVSTALLRRR (227 aa)) form the ABC transmembrane type-2 domain. 6 consecutive transmembrane segments (helical) span residues 32–52 (ILGN…GLGV), 64–84 (AFLA…FETI), 116–136 (AWAA…AAML), 141–161 (WLAL…FASL), 174–194 (YFIF…GAVF), and 228–248 (IANV…PFLV).

Belongs to the ABC-2 integral membrane protein family. Lipooligosaccharide exporter (TC 3.A.1.102) subfamily. The complex is composed of two ATP-binding proteins (NodI) and two transmembrane proteins (NodJ).

The protein localises to the cell inner membrane. Functionally, part of the ABC transporter complex NodIJ involved in the export of the nodulation factors (Nod factors), the bacterial signal molecules that induce symbiosis and subsequent nodulation induction. Nod factors are LCO (lipo-chitin oligosaccharide), a modified beta-1,4-linked N-acetylglucosamine oligosaccharide. This subunit encodes the transporter. This is Nodulation protein J (nodJ) from Rhizobium leguminosarum bv. viciae.